A 543-amino-acid chain; its full sequence is Sensor histidine kinase DcuS (543 aa).

Over M1–T20 the chain is Cytoplasmic. Residues V21–F41 traverse the membrane as a helical segment. Over S42–W181 the chain is Periplasmic. (R)-malate is bound by residues R107–H110, K121, G140–L142, and R147. A helical membrane pass occupies residues S182–V202. The Cytoplasmic segment spans residues K203–R543. Residues L212 to D323 enclose the PAS domain. Positions E346–G538 constitute a Histidine kinase domain. At H349 the chain carries Phosphohistidine; by autocatalysis.

As to quaternary structure, homodimer. In terms of processing, autophosphorylated. The phosphoryl group is rapidly transferred to DcuR.

Its subcellular location is the cell inner membrane. The enzyme catalyses ATP + protein L-histidine = ADP + protein N-phospho-L-histidine.. Its function is as follows. Member of the two-component regulatory system DcuR/DcuS. Involved in the C4-dicarboxylate-stimulated regulation of the genes encoding the anaerobic fumarate respiratory system (frdABCD; nuoAN; dcuB; sdhCDAB; etc.). Weakly regulates the aerobic C4-dicarboxylate transporter dctA. Activates DcuR by phosphorylation. This is Sensor histidine kinase DcuS (dcuS) from Shigella flexneri.